The primary structure comprises 419 residues: Ribosome biogenesis protein NOP53 (419 aa).

2 disordered regions span residues 1-21 (MGIK…KNKR) and 233-283 (KAFE…KIRQ). Residues 233–261 (KAFEDKGLVSDQDVNHSIDSDDQSEHEQA) are compositionally biased toward basic and acidic residues. 4 positions are modified to phosphoserine: Ser242, Ser249, Ser252, and Ser256. Residues 269–283 (KNKRKTRSQRNKIRQ) show a composition bias toward basic residues.

The protein belongs to the NOP53 family.

The protein resides in the nucleus. The protein localises to the nucleolus. It is found in the nucleoplasm. May play a role in ribosome biogenesis. The chain is Ribosome biogenesis protein NOP53 from Schizosaccharomyces pombe (strain 972 / ATCC 24843) (Fission yeast).